The primary structure comprises 334 residues: Cytosolic Fe-S cluster assembly factor NBP35 (334 aa).

[4Fe-4S] cluster contacts are provided by cysteine 33, cysteine 47, cysteine 50, and cysteine 56. Residue 86 to 93 (GKGGVGKS) coordinates ATP. Residues cysteine 259 and cysteine 262 each contribute to the [4Fe-4S] cluster site.

The protein belongs to the Mrp/NBP35 ATP-binding proteins family. NUBP1/NBP35 subfamily. As to quaternary structure, heterotetramer of 2 NBP35 and 2 CFD1 chains. Requires [4Fe-4S] cluster as cofactor.

The protein resides in the cytoplasm. The protein localises to the nucleus. In terms of biological role, component of the cytosolic iron-sulfur (Fe/S) protein assembly (CIA) machinery. Required for maturation of extramitochondrial Fe-S proteins. The NBP35-CFD1 heterotetramer forms a Fe-S scaffold complex, mediating the de novo assembly of an Fe-S cluster and its transfer to target apoproteins. Required for biogenesis and export of both ribosomal subunits, which may reflect a role in assembly of the Fe/S clusters in RLI1, a protein which performs rRNA processing and ribosome export. The sequence is that of Cytosolic Fe-S cluster assembly factor NBP35 from Candida glabrata (strain ATCC 2001 / BCRC 20586 / JCM 3761 / NBRC 0622 / NRRL Y-65 / CBS 138) (Yeast).